Consider the following 449-residue polypeptide: Adenosylhomocysteinase (449 aa).

S2 carries the N-acetylserine modification. K21 participates in a covalent cross-link: Glycyl lysine isopeptide (Lys-Gly) (interchain with G-Cter in ubiquitin). T58, D134, and E159 together coordinate substrate. 160–162 is an NAD(+) binding site; the sequence is TTT. Residues K189 and D193 each coordinate substrate. NAD(+) contacts are provided by residues N194, 223 to 228, E246, 302 to 304, and N349; these read GYGDVG and IGH. T393 carries the post-translational modification Phosphothreonine. K413 participates in a covalent cross-link: Glycyl lysine isopeptide (Lys-Gly) (interchain with G-Cter in ubiquitin).

The protein belongs to the adenosylhomocysteinase family. The cofactor is NAD(+).

It carries out the reaction S-adenosyl-L-homocysteine + H2O = L-homocysteine + adenosine. It functions in the pathway amino-acid biosynthesis; L-homocysteine biosynthesis; L-homocysteine from S-adenosyl-L-homocysteine: step 1/1. Adenosylhomocysteine is a competitive inhibitor of S-adenosyl-L-methionine-dependent methyl transferase reactions; therefore adenosylhomocysteinase may play a key role in the control of methylations via regulation of the intracellular concentration of adenosylhomocysteine. This is Adenosylhomocysteinase (SAH1) from Saccharomyces cerevisiae (strain ATCC 204508 / S288c) (Baker's yeast).